The following is a 97-amino-acid chain: Aspartyl/glutamyl-tRNA(Asn/Gln) amidotransferase subunit C (97 aa).

A disordered region spans residues 59-78; that stretch reads STGKLRPDEPAQPLSRDDAL. Over residues 63 to 78 the composition is skewed to basic and acidic residues; the sequence is LRPDEPAQPLSRDDAL.

Belongs to the GatC family. As to quaternary structure, heterotrimer of A, B and C subunits.

It catalyses the reaction L-glutamyl-tRNA(Gln) + L-glutamine + ATP + H2O = L-glutaminyl-tRNA(Gln) + L-glutamate + ADP + phosphate + H(+). The enzyme catalyses L-aspartyl-tRNA(Asn) + L-glutamine + ATP + H2O = L-asparaginyl-tRNA(Asn) + L-glutamate + ADP + phosphate + 2 H(+). Allows the formation of correctly charged Asn-tRNA(Asn) or Gln-tRNA(Gln) through the transamidation of misacylated Asp-tRNA(Asn) or Glu-tRNA(Gln) in organisms which lack either or both of asparaginyl-tRNA or glutaminyl-tRNA synthetases. The reaction takes place in the presence of glutamine and ATP through an activated phospho-Asp-tRNA(Asn) or phospho-Glu-tRNA(Gln). The chain is Aspartyl/glutamyl-tRNA(Asn/Gln) amidotransferase subunit C from Metallosphaera sedula (strain ATCC 51363 / DSM 5348 / JCM 9185 / NBRC 15509 / TH2).